Reading from the N-terminus, the 216-residue chain is [5-(aminomethyl)furan-3-yl]methyl phosphate kinase (216 aa).

Residues 5-9, Gly39, Asp142, 147-152, and Gly166 each bind ATP; these read KIGGS and YDKFPG.

Belongs to the MfnE family. As to quaternary structure, homotrimer. Mg(2+) is required as a cofactor.

It carries out the reaction [5-(aminomethyl)-3-furyl]methyl phosphate + ATP = [5-(aminomethyl)furan-3-yl]methyl diphosphate + ADP. The protein operates within cofactor biosynthesis; methanofuran biosynthesis. Its activity is regulated as follows. Inhibited by EDTA. In terms of biological role, catalyzes the formation of 5-(aminomethyl)-3-furanmethanol diphosphate (F1-PP) from 5-(aminomethyl)-3-furanmethanol phosphate (F1-P) and ATP. In vitro, can also act as an adenylate kinase that catalyzes the transfer of a phosphoryl group from ATP to AMP, generating two molecules of ADP. This is [5-(aminomethyl)furan-3-yl]methyl phosphate kinase from Methanocaldococcus jannaschii (strain ATCC 43067 / DSM 2661 / JAL-1 / JCM 10045 / NBRC 100440) (Methanococcus jannaschii).